A 1248-amino-acid polypeptide reads, in one-letter code: von Willebrand factor A domain-containing protein 5B2 (1248 aa).

The VIT domain occupies 1–138; that stretch reads MPGLYCPTSW…TMTVTLCSSR (138 aa). Residues 184 to 204 are disordered; the sequence is VGSPEEERPTWEQPTATPDVF. In terms of domain architecture, VWFA spans 354-527; it reads ELLFLLDGSG…KALEPALSDI (174 aa). 5 disordered regions span residues 590 to 650, 672 to 710, 751 to 789, 1008 to 1037, and 1126 to 1168; these read PEEV…SSDT, SASP…QQGC, ALAG…EPGQ, SKSA…RLSL, and DSAT…SSDL. Residues 595 to 619 are compositionally biased toward polar residues; it reads SATSPGTEPTHTTEPLGTGTVSAEL. Low complexity-rich tracts occupy residues 684–701, 751–764, and 780–789; these read SSES…GSRP, ALAG…SGRA, and PDGLGPEPGQ. Positions 1127-1145 are enriched in low complexity; sequence SATASCSQSPSSGSEGPGQ. Residues 1159–1168 are compositionally biased toward basic and acidic residues; sequence GMERQDSSDL.

The protein is von Willebrand factor A domain-containing protein 5B2 (Vwa5b2) of Mus musculus (Mouse).